We begin with the raw amino-acid sequence, 249 residues long: 3alpha-hydroxy bile acid-CoA-ester 3-dehydrogenase 2 (249 aa).

NAD(+)-binding positions include 15–18 (TRGI), Glu-38, Glu-42, and Asn-92. Substrate is bound at residue Ser-144. Catalysis depends on proton donor/acceptor residues Tyr-157 and Lys-161. Residues Lys-161 and 190-192 (VNT) contribute to the NAD(+) site.

This sequence belongs to the short-chain dehydrogenases/reductases (SDR) family. As to quaternary structure, homotetramer.

The enzyme catalyses a 3alpha-hydroxy bile acid CoA + NAD(+) = a 3-oxo bile acid CoA + NADH + H(+). It carries out the reaction choloyl-CoA + NAD(+) = 7alpha,12alpha-dihydroxy-3-oxochol-24-oyl-CoA + NADH + H(+). The catalysed reaction is chenodeoxycholoyl-CoA + NAD(+) = 7alpha-hydroxy-3-oxochol-24-oyl-CoA + NADH + H(+). It catalyses the reaction deoxycholoyl-CoA + NAD(+) = 12alpha-hydroxy-3-oxocholan-24-oyl-CoA + NADH + H(+). The enzyme catalyses lithocholoyl-CoA + NAD(+) = 3-oxocholan-24-oyl-CoA + NADH + H(+). It functions in the pathway lipid metabolism; bile acid biosynthesis. Its function is as follows. Involved in the multi-step bile acid 7alpha-dehydroxylation pathway that transforms primary bile acids to secondary bile acids in the human gut. Catalyzes the oxidation of C3-hydroxyl group of CoA conjugated bile acids generating a C3-oxo bile acid intermediate. Can use choloyl-CoA, chenodeoxycholoyl-CoA, deoxycholoyl-CoA, and lithocholoyl-CoA as substrates with similar efficiency. Highly prefers NAD over NADP as cosubstrate. Also catalyzes the reverse reactions; in vitro, the preferred direction of reaction depends on the pH. Has very little activity with unconjugated (non-CoA) bile acid substrates. The sequence is that of 3alpha-hydroxy bile acid-CoA-ester 3-dehydrogenase 2 (baiA2) from Clostridium scindens (strain JCM 10418 / VPI 12708).